Here is a 276-residue protein sequence, read N- to C-terminus: 2,3,4,5-tetrahydropyridine-2,6-dicarboxylate N-succinyltransferase (276 aa).

R104 and D141 together coordinate substrate.

It belongs to the transferase hexapeptide repeat family. As to quaternary structure, homotrimer.

The protein resides in the cytoplasm. It catalyses the reaction (S)-2,3,4,5-tetrahydrodipicolinate + succinyl-CoA + H2O = (S)-2-succinylamino-6-oxoheptanedioate + CoA. Its pathway is amino-acid biosynthesis; L-lysine biosynthesis via DAP pathway; LL-2,6-diaminopimelate from (S)-tetrahydrodipicolinate (succinylase route): step 1/3. This is 2,3,4,5-tetrahydropyridine-2,6-dicarboxylate N-succinyltransferase from Legionella pneumophila (strain Paris).